The primary structure comprises 455 residues: Kynurenine 3-monooxygenase (455 aa).

It belongs to the aromatic-ring hydroxylase family. KMO subfamily. FAD is required as a cofactor.

The catalysed reaction is L-kynurenine + NADPH + O2 + H(+) = 3-hydroxy-L-kynurenine + NADP(+) + H2O. Its pathway is cofactor biosynthesis; NAD(+) biosynthesis; quinolinate from L-kynurenine: step 1/3. Functionally, catalyzes the hydroxylation of L-kynurenine (L-Kyn) to form 3-hydroxy-L-kynurenine (L-3OHKyn). Required for synthesis of quinolinic acid. This chain is Kynurenine 3-monooxygenase, found in Xanthomonas axonopodis pv. citri (strain 306).